We begin with the raw amino-acid sequence, 124 residues long: Small ribosomal subunit protein uS12c (124 aa).

The protein belongs to the universal ribosomal protein uS12 family. Part of the 30S ribosomal subunit.

It is found in the plastid. It localises to the chloroplast. In terms of biological role, with S4 and S5 plays an important role in translational accuracy. Located at the interface of the 30S and 50S subunits. This chain is Small ribosomal subunit protein uS12c (rps12), found in Cyanidium caldarium (Red alga).